Reading from the N-terminus, the 78-residue chain is Mitotic-spindle organizing protein 1 (78 aa).

Alanine 2 is modified (N-acetylalanine).

This sequence belongs to the MOZART1 family. Associates with the gamma-tubulin ring complex (gTuRC) consisting of TUBGCP2, TUBGCP3, TUBGCP4, TUBGCP5 and TUBGCP6 and gamma-tubulin TUBG1 or TUBG2; within the complex, interacts with TUBGCP3 and TUBGCP6 to form a luminal bridge with actin that stabilizes the initial structure during complex assembly. Interacts with TUBG1.

The protein localises to the cytoplasm. Its subcellular location is the cytoskeleton. It is found in the microtubule organizing center. It localises to the centrosome. The protein resides in the spindle. Functionally, required for the recruitment and the assembly of the gamma-tubulin ring complex (gTuRC) at the centrosome. The gTuRC regulates the minus-end nucleation of alpha-beta tubulin heterodimers that grow into microtubule protafilaments, a critical step in centrosome duplication and spindle formation. In Mus musculus (Mouse), this protein is Mitotic-spindle organizing protein 1 (Mzt1).